A 103-amino-acid chain; its full sequence is Putative membrane protein insertion efficiency factor (103 aa).

It belongs to the UPF0161 family.

It localises to the cell inner membrane. In terms of biological role, could be involved in insertion of integral membrane proteins into the membrane. This is Putative membrane protein insertion efficiency factor from Chlamydia caviae (strain ATCC VR-813 / DSM 19441 / 03DC25 / GPIC) (Chlamydophila caviae).